The following is a 599-amino-acid chain: NTPase KAP family P-loop domain-containing protein 1 (599 aa).

Residues 1–416 (MQQEAAQRES…NTVPITVRLL (416 aa)) enclose the KAP NTPase domain. Transmembrane regions (helical) follow at residues 25–45 (GWGV…ITEL), 119–139 (VCLA…LLYL), and 156–176 (ALGG…VYSV). Positions 543 to 599 (ALKPPSPPKSPSQDGPQASPRAIIAAGTSHAGQGSGHSKEAHQTRDRTHGGKPRPMA) are disordered. Positions 579–591 (HSKEAHQTRDRTH) are enriched in basic and acidic residues.

The protein resides in the membrane. This chain is NTPase KAP family P-loop domain-containing protein 1 (Nkpd1), found in Mus musculus (Mouse).